A 251-amino-acid polypeptide reads, in one-letter code: Ribosomal RNA small subunit methyltransferase J (251 aa).

Residues 100–101 (RD), 116–117 (ER), and Asp-170 each bind S-adenosyl-L-methionine.

This sequence belongs to the methyltransferase superfamily. RsmJ family.

It localises to the cytoplasm. It catalyses the reaction guanosine(1516) in 16S rRNA + S-adenosyl-L-methionine = N(2)-methylguanosine(1516) in 16S rRNA + S-adenosyl-L-homocysteine + H(+). Functionally, specifically methylates the guanosine in position 1516 of 16S rRNA. The polypeptide is Ribosomal RNA small subunit methyltransferase J (Haemophilus ducreyi (strain 35000HP / ATCC 700724)).